The primary structure comprises 101 residues: RNA-binding protein Hfq (101 aa).

The region spanning 9–68 (DPFLNALRRERVPVSIYLVNGIKLQGQIESFDQFVILLKNTVSQMVYKHAISTVVPSRPV) is the Sm domain. The disordered stretch occupies residues 63–101 (VPSRPVSHHNNNPSGGSSNYHHGSTPASQPSQPESDDAE). Residues 70 to 86 (HHNNNPSGGSSNYHHGS) show a composition bias toward low complexity.

Belongs to the Hfq family. In terms of assembly, homohexamer.

In terms of biological role, RNA chaperone that binds small regulatory RNA (sRNAs) and mRNAs to facilitate mRNA translational regulation in response to envelope stress, environmental stress and changes in metabolite concentrations. Also binds with high specificity to tRNAs. This is RNA-binding protein Hfq from Sodalis glossinidius (strain morsitans).